The sequence spans 210 residues: MNNLLSKFKDFVGLNEPVEYEYDYDEMEGEQYVYPQQQQTPAAVPTQEESRSNRRLRNRASATTATTASTTGINGVVQQESGMGSVMNNVIGMPGALNGMSEVVVLEPRTFEEMPQAIRALRERKSVVLNLTIMDPEQAQRAVDFVAGGTYALDGHQERIGESIFLFTPSCVQVRTQTGLVNEMSQTQPRPRVPNSGSQVWQPEQIQMIQ.

Low complexity-rich tracts occupy residues 36–47 (QQQQTPAAVPTQ) and 59–69 (RASATTATTAS). Disordered stretches follow at residues 36 to 69 (QQQQ…TTAS) and 182 to 210 (NEMS…QMIQ).

It belongs to the SepF family. In terms of assembly, homodimer. Interacts with FtsZ.

Its subcellular location is the cytoplasm. In terms of biological role, cell division protein that is part of the divisome complex and is recruited early to the Z-ring. Probably stimulates Z-ring formation, perhaps through the cross-linking of FtsZ protofilaments. Its function overlaps with FtsA. In Trichodesmium erythraeum (strain IMS101), this protein is Cell division protein SepF.